Here is a 391-residue protein sequence, read N- to C-terminus: GTPase Obg (391 aa).

In terms of domain architecture, Obg spans 1–159 (MKFLDQAKIF…IWVWLRLKLI (159 aa)). The region spanning 160-327 (ADAGLIGLPN…VLRVMATHVD (168 aa)) is the OBG-type G domain. Residues 166-173 (GLPNAGKS), 191-195 (FTTLH), 212-215 (DIPG), 279-282 (SKID), and 308-310 (SAI) contribute to the GTP site. Residues Ser173 and Thr193 each coordinate Mg(2+). The disordered stretch occupies residues 352-391 (TGIDHGYNRPSAVVDWEDAPFDDDDDDDGDESGDKGQWTR). The span at 366–382 (DWEDAPFDDDDDDDGDE) shows a compositional bias: acidic residues.

Belongs to the TRAFAC class OBG-HflX-like GTPase superfamily. OBG GTPase family. In terms of assembly, monomer. Requires Mg(2+) as cofactor.

The protein localises to the cytoplasm. An essential GTPase which binds GTP, GDP and possibly (p)ppGpp with moderate affinity, with high nucleotide exchange rates and a fairly low GTP hydrolysis rate. Plays a role in control of the cell cycle, stress response, ribosome biogenesis and in those bacteria that undergo differentiation, in morphogenesis control. The protein is GTPase Obg of Rhodospirillum rubrum (strain ATCC 11170 / ATH 1.1.1 / DSM 467 / LMG 4362 / NCIMB 8255 / S1).